Here is a 507-residue protein sequence, read N- to C-terminus: TOM1-like protein 2 (507 aa).

One can recognise a VHS domain in the interval 20-152; that stretch reads ATDGSLQSED…ELKRKGVEFP (133 aa). S160 carries the phosphoserine modification. The segment at 162–210 is disordered; the sequence is IHTPQRSVPEVDPAATMPRSQSQQRTSAGSYSSPPPAPYSAPQAPALSV. A Phosphothreonine modification is found at T164. The region spanning 219 to 307 is the GAT domain; the sequence is EQIARLRSEL…VFLRYERFER (89 aa). The Clathrin-binding signature appears at 329–334; sequence NLIDLG. A disordered region spans residues 467 to 507; it reads RAKAAEMVPDLPSPPMEAPAPASNPSGRKKPERSEDALFAL. Residues 498–507 are compositionally biased toward basic and acidic residues; sequence ERSEDALFAL.

It belongs to the TOM1 family. In terms of assembly, interacts with clathrin, SRC and TOLLIP. Interacts with MYO6. In terms of tissue distribution, ubiquitously expressed with higher expression in heart and skeletal muscle.

Acts as a MYO6/Myosin VI adapter protein that targets myosin VI to endocytic structures. May also play a role in recruiting clathrin to endosomes. May regulate growth factor-induced mitogenic signaling. The protein is TOM1-like protein 2 (TOM1L2) of Homo sapiens (Human).